The following is a 421-amino-acid chain: UDP-N-acetylglucosamine 1-carboxyvinyltransferase (421 aa).

22–23 (KN) is a phosphoenolpyruvate binding site. Arg-93 is a UDP-N-acetyl-alpha-D-glucosamine binding site. Cys-117 functions as the Proton donor in the catalytic mechanism. Position 117 is a 2-(S-cysteinyl)pyruvic acid O-phosphothioketal (Cys-117). UDP-N-acetyl-alpha-D-glucosamine contacts are provided by residues 122–126 (RPVDL), Asp-308, and Ile-330.

This sequence belongs to the EPSP synthase family. MurA subfamily.

It localises to the cytoplasm. The enzyme catalyses phosphoenolpyruvate + UDP-N-acetyl-alpha-D-glucosamine = UDP-N-acetyl-3-O-(1-carboxyvinyl)-alpha-D-glucosamine + phosphate. It participates in cell wall biogenesis; peptidoglycan biosynthesis. Its function is as follows. Cell wall formation. Adds enolpyruvyl to UDP-N-acetylglucosamine. The sequence is that of UDP-N-acetylglucosamine 1-carboxyvinyltransferase from Pseudomonas fluorescens (strain ATCC BAA-477 / NRRL B-23932 / Pf-5).